The primary structure comprises 181 residues: 6,7-dimethyl-8-ribityllumazine synthase (181 aa).

Residues tyrosine 27, 58–60 (ALE), and 87–89 (CVI) each bind 5-amino-6-(D-ribitylamino)uracil. 92–93 (ET) contributes to the (2S)-2-hydroxy-3-oxobutyl phosphate binding site. The active-site Proton donor is histidine 95. A 5-amino-6-(D-ribitylamino)uracil-binding site is contributed by asparagine 120. (2S)-2-hydroxy-3-oxobutyl phosphate is bound at residue arginine 134.

Belongs to the DMRL synthase family.

The catalysed reaction is (2S)-2-hydroxy-3-oxobutyl phosphate + 5-amino-6-(D-ribitylamino)uracil = 6,7-dimethyl-8-(1-D-ribityl)lumazine + phosphate + 2 H2O + H(+). The protein operates within cofactor biosynthesis; riboflavin biosynthesis; riboflavin from 2-hydroxy-3-oxobutyl phosphate and 5-amino-6-(D-ribitylamino)uracil: step 1/2. Its function is as follows. Catalyzes the formation of 6,7-dimethyl-8-ribityllumazine by condensation of 5-amino-6-(D-ribitylamino)uracil with 3,4-dihydroxy-2-butanone 4-phosphate. This is the penultimate step in the biosynthesis of riboflavin. The sequence is that of 6,7-dimethyl-8-ribityllumazine synthase from Methylobacterium sp. (strain 4-46).